A 246-amino-acid chain; its full sequence is Nodulin-25 (246 aa).

Positions 1–24 (MVYSNTYMLLGLGVFVLLSSHVLA) are cleaved as a signal peptide.

The protein localises to the symbiosome. The protein resides in the peribacteroid space. Involved in the development and function of nodules. It might participate in the biological process of symbiotic nitrogen fixation. The chain is Nodulin-25 (NMS-25) from Medicago sativa (Alfalfa).